An 858-amino-acid chain; its full sequence is Chitin synthase 2 (858 aa).

Residues 1 to 12 (MYPEGPKPEHDQ) are compositionally biased toward basic and acidic residues. Residues 1 to 116 (MYPEGPKPEH…GQAPRRQPRR (116 aa)) form a disordered region. Residues 15–24 (LQDTQFSNQP) show a composition bias toward polar residues. Composition is skewed to pro residues over residues 52–68 (AYPP…PNFP) and 76–89 (PYPP…PVSP). Helical transmembrane passes span 500–517 (RWLN…YHWR), 540–560 (TYNL…FFIL), 586–606 (LHTV…IMAL), 621–641 (MVFF…ITVV), 665–685 (NIII…FMFL), 799–819 (VLAW…TTVI), and 825–845 (ASIY…IRFT).

This sequence belongs to the chitin synthase family.

Its subcellular location is the cell membrane. It catalyses the reaction [(1-&gt;4)-N-acetyl-beta-D-glucosaminyl](n) + UDP-N-acetyl-alpha-D-glucosamine = [(1-&gt;4)-N-acetyl-beta-D-glucosaminyl](n+1) + UDP + H(+). In terms of biological role, polymerizes chitin, a structural polymer of the cell wall and septum, by transferring the sugar moiety of UDP-GlcNAc to the non-reducing end of the growing chitin polymer. The protein is Chitin synthase 2 (CHS2) of Rhizopus oligosporus (Rhizopus microsporus var. oligosporus).